Consider the following 674-residue polypeptide: DNA ligase (674 aa).

NAD(+) contacts are provided by residues 34-38 (DADFD), 82-83 (SL), and Glu107. Catalysis depends on Lys109, which acts as the N6-AMP-lysine intermediate. 4 residues coordinate NAD(+): Arg130, Glu170, Lys286, and Lys310. The Zn(2+) site is built by Cys404, Cys407, Cys423, and Cys429. A BRCT domain is found at 593 to 674 (KPAQTLEGIT…FTRLLETGEA (82 aa)).

The protein belongs to the NAD-dependent DNA ligase family. LigA subfamily. Mg(2+) serves as cofactor. Mn(2+) is required as a cofactor.

The catalysed reaction is NAD(+) + (deoxyribonucleotide)n-3'-hydroxyl + 5'-phospho-(deoxyribonucleotide)m = (deoxyribonucleotide)n+m + AMP + beta-nicotinamide D-nucleotide.. DNA ligase that catalyzes the formation of phosphodiester linkages between 5'-phosphoryl and 3'-hydroxyl groups in double-stranded DNA using NAD as a coenzyme and as the energy source for the reaction. It is essential for DNA replication and repair of damaged DNA. The protein is DNA ligase of Corynebacterium aurimucosum (strain ATCC 700975 / DSM 44827 / CIP 107346 / CN-1) (Corynebacterium nigricans).